The chain runs to 506 residues: Cobyric acid synthase (506 aa).

The GATase cobBQ-type domain occupies D251 to F448. C332 serves as the catalytic Nucleophile. H440 is an active-site residue.

It belongs to the CobB/CobQ family. CobQ subfamily.

It functions in the pathway cofactor biosynthesis; adenosylcobalamin biosynthesis. Functionally, catalyzes amidations at positions B, D, E, and G on adenosylcobyrinic A,C-diamide. NH(2) groups are provided by glutamine, and one molecule of ATP is hydrogenolyzed for each amidation. This Salmonella arizonae (strain ATCC BAA-731 / CDC346-86 / RSK2980) protein is Cobyric acid synthase.